A 359-amino-acid polypeptide reads, in one-letter code: 3-dehydroquinate synthase (359 aa).

NAD(+) is bound by residues 71 to 76, 105 to 109, 129 to 130, K142, and K151; these read DAEAAK, GAVTD, and TT. Residues E184, H247, and H263 each coordinate Zn(2+).

It belongs to the sugar phosphate cyclases superfamily. Dehydroquinate synthase family. NAD(+) is required as a cofactor. It depends on Co(2+) as a cofactor. Requires Zn(2+) as cofactor.

The protein resides in the cytoplasm. It carries out the reaction 7-phospho-2-dehydro-3-deoxy-D-arabino-heptonate = 3-dehydroquinate + phosphate. Its pathway is metabolic intermediate biosynthesis; chorismate biosynthesis; chorismate from D-erythrose 4-phosphate and phosphoenolpyruvate: step 2/7. Catalyzes the conversion of 3-deoxy-D-arabino-heptulosonate 7-phosphate (DAHP) to dehydroquinate (DHQ). The chain is 3-dehydroquinate synthase from Leifsonia xyli subsp. xyli (strain CTCB07).